Consider the following 311-residue polypeptide: Quinolinate synthase (311 aa).

Iminosuccinate contacts are provided by His25 and Ser42. Position 87 (Cys87) interacts with [4Fe-4S] cluster. Iminosuccinate is bound by residues 113 to 115 (YIN) and Ser130. Cys175 provides a ligand contact to [4Fe-4S] cluster. Iminosuccinate contacts are provided by residues 201–203 (HPE) and Thr218. Position 268 (Cys268) interacts with [4Fe-4S] cluster.

The protein belongs to the quinolinate synthase family. Type 2 subfamily. [4Fe-4S] cluster is required as a cofactor.

The protein resides in the cytoplasm. It catalyses the reaction iminosuccinate + dihydroxyacetone phosphate = quinolinate + phosphate + 2 H2O + H(+). The protein operates within cofactor biosynthesis; NAD(+) biosynthesis; quinolinate from iminoaspartate: step 1/1. Functionally, catalyzes the condensation of iminoaspartate with dihydroxyacetone phosphate to form quinolinate. This Saccharolobus solfataricus (strain ATCC 35092 / DSM 1617 / JCM 11322 / P2) (Sulfolobus solfataricus) protein is Quinolinate synthase.